A 162-amino-acid polypeptide reads, in one-letter code: Ribosomal RNA large subunit methyltransferase H (162 aa).

Gly-108 is an S-adenosyl-L-methionine binding site.

The protein belongs to the RNA methyltransferase RlmH family. Homodimer.

The protein resides in the cytoplasm. The enzyme catalyses pseudouridine(1915) in 23S rRNA + S-adenosyl-L-methionine = N(3)-methylpseudouridine(1915) in 23S rRNA + S-adenosyl-L-homocysteine + H(+). Specifically methylates the pseudouridine at position 1915 (m3Psi1915) in 23S rRNA. The polypeptide is Ribosomal RNA large subunit methyltransferase H (Methylobacterium nodulans (strain LMG 21967 / CNCM I-2342 / ORS 2060)).